Consider the following 336-residue polypeptide: Protein-glutamate methylesterase/protein-glutamine glutaminase 2 (336 aa).

One can recognise a Response regulatory domain in the interval 2 to 119 (KIAIVNDMPM…PNPKEAAAPL (118 aa)). D53 carries the post-translational modification 4-aspartylphosphate. A CheB-type methylesterase domain is found at 147–336 (PSRRDRLVAI…APRLIEVFTQ (190 aa)). Active-site residues include S159, H186, and D279.

This sequence belongs to the CheB family. Post-translationally, phosphorylated by CheA. Phosphorylation of the N-terminal regulatory domain activates the methylesterase activity.

It is found in the cytoplasm. The enzyme catalyses [protein]-L-glutamate 5-O-methyl ester + H2O = L-glutamyl-[protein] + methanol + H(+). It catalyses the reaction L-glutaminyl-[protein] + H2O = L-glutamyl-[protein] + NH4(+). In terms of biological role, involved in chemotaxis. Part of a chemotaxis signal transduction system that modulates chemotaxis in response to various stimuli. Catalyzes the demethylation of specific methylglutamate residues introduced into the chemoreceptors (methyl-accepting chemotaxis proteins or MCP) by CheR. Also mediates the irreversible deamidation of specific glutamine residues to glutamic acid. The sequence is that of Protein-glutamate methylesterase/protein-glutamine glutaminase 2 from Pseudomonas syringae pv. syringae (strain B728a).